We begin with the raw amino-acid sequence, 383 residues long: Na(+)/H(+) antiporter NhaA (383 aa).

11 helical membrane-spanning segments follow: residues 10 to 30, 56 to 76, 91 to 111, 121 to 141, 150 to 170, 174 to 194, 206 to 226, 254 to 274, 289 to 308, 327 to 347, and 355 to 375; these read LIGG…NNSP, LMHW…GLEI, IITP…IYLS, GWAI…ALLG, LLVI…IAIF, SLSL…IICN, VVLG…ATLA, PWII…ISFS, IIWG…LAVF, GISL…VLAF, and AIKI…YIVL.

Belongs to the NhaA Na(+)/H(+) (TC 2.A.33) antiporter family.

Its subcellular location is the cell inner membrane. It carries out the reaction Na(+)(in) + 2 H(+)(out) = Na(+)(out) + 2 H(+)(in). Functionally, na(+)/H(+) antiporter that extrudes sodium in exchange for external protons. The polypeptide is Na(+)/H(+) antiporter NhaA (Francisella tularensis subsp. holarctica (strain FTNF002-00 / FTA)).